The sequence spans 230 residues: PKHD-type hydroxylase PD_1553 (230 aa).

A Fe2OG dioxygenase domain is found at 78 to 182; the sequence is RTLPPRFNRY…RIASFFWVQS (105 aa). The Fe cation site is built by histidine 96, aspartate 98, and histidine 163. Arginine 173 lines the 2-oxoglutarate pocket.

It depends on Fe(2+) as a cofactor. L-ascorbate serves as cofactor.

In Xylella fastidiosa (strain Temecula1 / ATCC 700964), this protein is PKHD-type hydroxylase PD_1553.